The primary structure comprises 513 residues: Histidine ammonia-lyase (513 aa).

A cross-link (5-imidazolinone (Ala-Gly)) is located at residues 144–146; that stretch reads ASG. 2,3-didehydroalanine (Ser) is present on Ser145.

Belongs to the PAL/histidase family. Post-translationally, contains an active site 4-methylidene-imidazol-5-one (MIO), which is formed autocatalytically by cyclization and dehydration of residues Ala-Ser-Gly.

The protein localises to the cytoplasm. The catalysed reaction is L-histidine = trans-urocanate + NH4(+). The protein operates within amino-acid degradation; L-histidine degradation into L-glutamate; N-formimidoyl-L-glutamate from L-histidine: step 1/3. In Streptococcus pyogenes serotype M18 (strain MGAS8232), this protein is Histidine ammonia-lyase.